The primary structure comprises 552 residues: MVSVQKVPAIALCSGVSLALLHFLCLAACLNESPGQNSKDEKLCPENFTRILDSLLDGYDNRLRPGFGGPVTEVKTDIYVTSFGPVSDVEMEYTMDVFFRQTWIDKRLKYDGPIEILRLNNMMVTKVWTPDTFFRNGKKSVSHNMTAPNKLFRIMRNGTILYTMRLTISAECPMRLVDFPMDGHACPLKFGSYAYPKSEMIYTWTKGPEKSVEVPKESSSLVQYDLIGQTVSSETIKSITGEYIVMTVYFHLRRKMGYFMIQTYIPCIMTVILSQVSFWINKESVPARTVFGITTVLTMTTLSISARHSLPKVSYATAMDWFIAVCFAFVFSALIEFAAVNYFTNIQMQKAKKKISKPPPEVPAAPVLKEKHTETSLQNTHANLNMRKRTNALVHSESDVKSRTEVGNHSSKTSAVQESSEATPKAHLASSPNPFSRANAAETMSAAARGLSSAASPSPHGTLRPASLGSASTRPAFGSRLGRIKTTVNTTGAAGNVSATPPPPAPPPSGSGTSKIDKYARILFPVTFGAFNMVYWVVYLSKDTMEKSESLM.

Residues 1-35 form the signal peptide; the sequence is MVSVQKVPAIALCSGVSLALLHFLCLAACLNESPG. The Extracellular segment spans residues 36-259; it reads QNSKDEKLCP…FHLRRKMGYF (224 aa). Residue N47 is glycosylated (N-linked (GlcNAc...) asparagine). R100 serves as a coordination point for 4-aminobutanoate. N144 and N157 each carry an N-linked (GlcNAc...) asparagine glycan. T163 provides a ligand contact to 4-aminobutanoate. C172 and C186 are disulfide-bonded. Residues 260–280 form a helical membrane-spanning segment; it reads MIQTYIPCIMTVILSQVSFWI. Residues 281 to 284 lie on the Cytoplasmic side of the membrane; that stretch reads NKES. Residues 285 to 305 form a helical membrane-spanning segment; the sequence is VPARTVFGITTVLTMTTLSIS. Residues 306–318 are Extracellular-facing; it reads ARHSLPKVSYATA. A helical membrane pass occupies residues 319–341; it reads MDWFIAVCFAFVFSALIEFAAVN. Over 342 to 515 the chain is Cytoplasmic; sequence YFTNIQMQKA…PPPSGSGTSK (174 aa). Disordered stretches follow at residues 353-480 and 492-513; these read KKIS…FGSR and GAAG…GSGT. The segment covering 396 to 406 has biased composition (basic and acidic residues); the sequence is SESDVKSRTEV. Over residues 407 to 422 the composition is skewed to polar residues; the sequence is GNHSSKTSAVQESSEA. The segment covering 445–458 has biased composition (low complexity); that stretch reads SAAARGLSSAASPS. Positions 500–509 are enriched in pro residues; it reads TPPPPAPPPS. A helical transmembrane segment spans residues 516–538; the sequence is IDKYARILFPVTFGAFNMVYWVV. The Extracellular portion of the chain corresponds to 539-552; that stretch reads YLSKDTMEKSESLM.

Belongs to the ligand-gated ion channel (TC 1.A.9) family. Gamma-aminobutyric acid receptor (TC 1.A.9.5) subfamily. GABRA4 sub-subfamily. As to quaternary structure, heteropentamer, formed by a combination of alpha (GABRA1-6), beta (GABRB1-3), gamma (GABRG1-3), delta (GABRD), epsilon (GABRE), rho (GABRR1-3), pi (GABRP) and theta (GABRQ) chains, each subunit exhibiting distinct physiological and pharmacological properties. As to expression, expressed in the brain.

The protein resides in the cell membrane. It localises to the postsynaptic cell membrane. The enzyme catalyses chloride(in) = chloride(out). Its activity is regulated as follows. Potentiated by gaboxadol. Potentiated by histamine. Its function is as follows. Alpha subunit of the heteropentameric ligand-gated chloride channel gated by gamma-aminobutyric acid (GABA), a major inhibitory neurotransmitter in the brain. GABA-gated chloride channels, also named GABA(A) receptors (GABAAR), consist of five subunits arranged around a central pore and contain GABA active binding site(s) located at the alpha and beta subunit interface(s). Alpha-4/GABRA4 subunit often assembles with delta or gamma-2 subunits, in combination with beta subunits. When activated by GABA, GABAARs selectively allow the flow of chloride anions across the cell membrane down their electrochemical gradient. GABAARs containing alpha-4 are predominantly extrasynaptic, contributing to tonic inhibition in dentate granule cells and thalamic relay neurons. Extrasynaptic alpha-4-containing GABAARs control levels of excitability and network activity. GABAAR containing alpha-4-beta-3-delta subunits can simultaneously bind GABA and histamine where histamine binds at the interface of two neighboring beta subunits, which may be involved in the regulation of sleep and wakefulness. This is Gamma-aminobutyric acid receptor subunit alpha-4 from Mus musculus (Mouse).